We begin with the raw amino-acid sequence, 877 residues long: ATP-dependent RNA helicase dbp7 (877 aa).

2 disordered regions span residues 34-163 (AKKT…LPPG) and 225-251 (FNPT…APLT). The segment covering 50 to 73 (STREIFSERQHDTGAEEYIGREPS) has biased composition (basic and acidic residues). The Q motif motif lies at 255 to 284 (ATFTNLGLSRRLAAHLSTKLDMKAPTAIQK). A Helicase ATP-binding domain is found at 288–484 (TQLISDDSDA…EISLKDAVHI (197 aa)). 301–308 (AETGSGKT) provides a ligand contact to ATP. The DEAD box motif lies at 417–420 (DEGD). In terms of domain architecture, Helicase C-terminal spans 512–719 (QLKQSYAIVP…LTHHTAEDLI (208 aa)). The interval 803–851 (PGLRPAKMTKADRSVAARKAKRGEKEEEKAPEGERVRKQRKMELDLPTV) is disordered. The segment covering 825-846 (GEKEEEKAPEGERVRKQRKMEL) has biased composition (basic and acidic residues).

Belongs to the DEAD box helicase family. DDX31/DBP7 subfamily.

Its subcellular location is the nucleus. It is found in the nucleolus. It catalyses the reaction ATP + H2O = ADP + phosphate + H(+). Functionally, ATP-binding RNA helicase involved in the biogenesis of 60S ribosomal subunits and is required for the normal formation of 25S and 5.8S rRNAs. The protein is ATP-dependent RNA helicase dbp7 (dbp7) of Sclerotinia sclerotiorum (strain ATCC 18683 / 1980 / Ss-1) (White mold).